A 464-amino-acid polypeptide reads, in one-letter code: Antithrombin-III (464 aa).

The signal sequence occupies residues 1–32; the sequence is MYSNVIGTVTSGKRKVYLLSLLLIGFWDCVTC. Intrachain disulfides connect Cys-40/Cys-160 and Cys-53/Cys-127. Thr-63 is subject to Phosphothreonine; by FAM20C. Ser-68 bears the Phosphoserine; by FAM20C mark. Heparin is bound at residue Trp-81. Asn-128 carries N-linked (GlcNAc...) asparagine glycosylation. Arg-161 is a binding site for heparin. Asn-167 carries an N-linked (GlcNAc...) asparagine glycan. Arg-177 contacts heparin. Asn-187 carries N-linked (GlcNAc...) (complex) asparagine glycosylation. Asn-224 is a glycosylation site (N-linked (GlcNAc...) asparagine). Cys-279 and Cys-462 are disulfide-bonded.

Belongs to the serpin family. As to quaternary structure, forms protease inhibiting heterodimer with TMPRSS7. In terms of processing, phosphorylated by FAM20C in the extracellular medium. As to expression, found in plasma.

Its subcellular location is the secreted. The protein resides in the extracellular space. In terms of biological role, most important serine protease inhibitor in plasma that regulates the blood coagulation cascade. AT-III inhibits thrombin, matriptase-3/TMPRSS7, as well as factors IXa, Xa and XIa. Its inhibitory activity is greatly enhanced in the presence of heparin. The polypeptide is Antithrombin-III (SERPINC1) (Homo sapiens (Human)).